The sequence spans 242 residues: uncharacterized protein (242 aa).

Polar residues predominate over residues Ser57–Gly67. Residues Ser57–Ser78 form a disordered region. In terms of domain architecture, DUF1279 spans Asp76–Lys188. A helical membrane pass occupies residues Tyr92 to Ala114. Residues Lys188–Phe237 are a coiled coil. Over residues Thr198 to Ser236 the composition is skewed to basic and acidic residues. Residues Thr198–Glu242 form a disordered region.

It is found in the membrane. This is an uncharacterized protein from Danio rerio (Zebrafish).